The chain runs to 229 residues: MAKKSKKMQEALKKVDATKAYSVEEAVALAKDTNIAKFDATVEVAYKLNVDPKKADQQIRGAVVLPNGTGKTQTVLVFAKGEKAKEAEAAGADFVGDDDMVAKIQGGWFDFDVVVATPDMMATVGKLGRVLGPKGLMPNPKTGTVTMDVTKAVEEVKAGKVTYRVDKAGNIHVPIGKVSFDNEKLVENFNTINDVLLKAKPSTAKGQYIKNISVTTTFGPGIHVDQASF.

The protein belongs to the universal ribosomal protein uL1 family. As to quaternary structure, part of the 50S ribosomal subunit.

Functionally, binds directly to 23S rRNA. The L1 stalk is quite mobile in the ribosome, and is involved in E site tRNA release. Protein L1 is also a translational repressor protein, it controls the translation of the L11 operon by binding to its mRNA. The polypeptide is Large ribosomal subunit protein uL1 (Enterococcus faecalis (strain ATCC 700802 / V583)).